An 86-amino-acid chain; its full sequence is Small ribosomal subunit protein uS17 (86 aa).

Belongs to the universal ribosomal protein uS17 family. As to quaternary structure, part of the 30S ribosomal subunit.

In terms of biological role, one of the primary rRNA binding proteins, it binds specifically to the 5'-end of 16S ribosomal RNA. The polypeptide is Small ribosomal subunit protein uS17 (Halalkalibacterium halodurans (strain ATCC BAA-125 / DSM 18197 / FERM 7344 / JCM 9153 / C-125) (Bacillus halodurans)).